The following is a 268-amino-acid chain: MERQPCREKFGLKRGPWTEEEDQKLTSYVLKNGIQGWRVIPKLAGLSRCGKSCRLRWMNYLRPDLKKGPLTEMEENQIIELHAHLGNRWSKIALHIPGRTDNEIKNYWNTHIKKKLKLLGIDPNNHQPFEHKGNVDETKIESDTKESNSQDMKQIVNEVSRQGNNDQITESTSPEIKDEIVTSCQSDYLMHNNDLMSNRSSNYYSPSFSMEESLSNPKSTGQTSFAVSIHEESMKQWVQSVDSKLPWDCFNQLDEQLYLSFQQNQSNS.

2 HTH myb-type domains span residues 9 to 61 (KFGL…MNYL) and 62 to 116 (RPDL…KKKL). 2 DNA-binding regions (H-T-H motif) span residues 37-61 (WRVI…MNYL) and 89-112 (WSKI…NTHI).

In terms of tissue distribution, expressed in roots, stems, leaves, seed pods and flowers. Strongest expression in the stem.

The protein resides in the nucleus. Its function is as follows. Transcription factor. This Antirrhinum majus (Garden snapdragon) protein is Myb-related protein 315.